An 801-amino-acid polypeptide reads, in one-letter code: MPGLHVVSFLVVLLLQLRSSGMHLVASELFWGNTLPNGDIYVGSFDGLVPHGPGKYMWTDGALYDGEWDKSKMTGRGLIQWPSGASYEGDFRGGFIDGAGTFKGVDGSVYKGSWRMNKKHGMGTMVYSNSDTYEGFWNEGLPDEFGKYTWADGNVYIGRWKSGKMNGSGVMQWINGDTLDCNWLNGLAHGKGYCKYASGACYIGTWDRGLKDGHGTFYQPGSKIPCNLEVSDCLTSHDGTSASSSSNEKITIGLLFLLQKLCKNWRLRRFLHRPRRISNGTTPVFDDNSGSHLCQDVSSKSFSADDQCLQDSEVDKDSVYEREYVQGVLIMEQPKNEDSRMSESGIAQENNWEKQAKGPMETIYKGHRSYYLMLNLQLGIRYTVGKITPVPLREVRSNDFGPRARIKMYFPCEGSQYTPPHYSVDFFWKDYCPMVFRNLREMFHIDAADYMMSICGGDSLKELSSPGKSGSIFYLSQDERFVIKTLRKTELKIGLMKYVLQILLKMLPKYYNHVKAYDNTLITKFFGVHRITLKPGRKVRFVVMGNMFCTELRIHRKYDLKGSTQGRSTKKQNINENTTLKDLDLSYVFHVDKPWREALFRQIALDCMFLESQSIIDYSMLLGIHFRAPNHLKRITSCQNALESTGISAETECSVALHHEETISSKGFLLVAADEPGPAVRGSHIRGSMVRAAEGGYEEVDLVLPGTGRFRVQLGVNMPARARKVQEDVNVEVENRDTIEEYDVVLYLGIIDILQEYNVSKRVEHAVKSLKFDPLSISAVDPNLYSRRFISFLEKVFPEQD.

Positions 1–21 are cleaved as a signal peptide; that stretch reads MPGLHVVSFLVVLLLQLRSSG. MORN repeat units lie at residues 41–63, 64–86, 87–109, 110–132, 133–155, 156–178, 182–201, and 202–223; these read YVGS…DGAL, YDGE…SGAS, YEGD…DGSV, YKGS…NSDT, YEGF…DGNV, YIGR…NGDT, NWLN…SGAC, and YIGT…PGSK. The 432-residue stretch at 366–797 folds into the PIPK domain; sequence GHRSYYLMLN…RFISFLEKVF (432 aa).

In terms of tissue distribution, expressed in young seedlings, shoot and seeds, and at lower level in roots, stem and leaf.

It carries out the reaction a 1,2-diacyl-sn-glycero-3-phospho-(1D-myo-inositol 4-phosphate) + ATP = a 1,2-diacyl-sn-glycero-3-phospho-(1D-myo-inositol-4,5-bisphosphate) + ADP + H(+). In terms of biological role, involved in flowering. May suppress floral initiation by modifying the expression of genes related to floral induction. The protein is Phosphatidylinositol 4-phosphate 5-kinase 1 (PIPK1) of Oryza sativa subsp. japonica (Rice).